A 176-amino-acid chain; its full sequence is Small ribosomal subunit protein uS5 (176 aa).

Residues 18–81 (FEEKMLFVNR…SIARKNMISV (64 aa)) form the S5 DRBM domain.

It belongs to the universal ribosomal protein uS5 family. Part of the 30S ribosomal subunit. Contacts proteins S4 and S8.

Functionally, with S4 and S12 plays an important role in translational accuracy. Located at the back of the 30S subunit body where it stabilizes the conformation of the head with respect to the body. In Deinococcus deserti (strain DSM 17065 / CIP 109153 / LMG 22923 / VCD115), this protein is Small ribosomal subunit protein uS5.